We begin with the raw amino-acid sequence, 78 residues long: MSKNNLNETESKIEIEAKVVELLSNDKFKVELPNKKTIIAYVSGKIRINNIRILPGDKVRIELSPYYPTQARITYRFK.

The S1-like domain occupies 2–78 (SKNNLNETES…TQARITYRFK (77 aa)).

This sequence belongs to the IF-1 family. As to quaternary structure, component of the 30S ribosomal translation pre-initiation complex which assembles on the 30S ribosome in the order IF-2 and IF-3, IF-1 and N-formylmethionyl-tRNA(fMet); mRNA recruitment can occur at any time during PIC assembly.

The protein localises to the cytoplasm. One of the essential components for the initiation of protein synthesis. Stabilizes the binding of IF-2 and IF-3 on the 30S subunit to which N-formylmethionyl-tRNA(fMet) subsequently binds. Helps modulate mRNA selection, yielding the 30S pre-initiation complex (PIC). Upon addition of the 50S ribosomal subunit IF-1, IF-2 and IF-3 are released leaving the mature 70S translation initiation complex. This Aster yellows witches'-broom phytoplasma (strain AYWB) protein is Translation initiation factor IF-1.